Here is a 379-residue protein sequence, read N- to C-terminus: Dual-specificity RNA methyltransferase RlmN (379 aa).

Residue Glu95 is the Proton acceptor of the active site. The region spanning Glu101–Asp345 is the Radical SAM core domain. A disulfide bridge connects residues Cys108 and Cys350. The [4Fe-4S] cluster site is built by Cys115, Cys119, and Cys122. S-adenosyl-L-methionine contacts are provided by residues Gly176–Glu177, Ser208, Ser230–His232, and Asn307. Cys350 functions as the S-methylcysteine intermediate in the catalytic mechanism.

The protein belongs to the radical SAM superfamily. RlmN family. It depends on [4Fe-4S] cluster as a cofactor.

Its subcellular location is the cytoplasm. It carries out the reaction adenosine(2503) in 23S rRNA + 2 reduced [2Fe-2S]-[ferredoxin] + 2 S-adenosyl-L-methionine = 2-methyladenosine(2503) in 23S rRNA + 5'-deoxyadenosine + L-methionine + 2 oxidized [2Fe-2S]-[ferredoxin] + S-adenosyl-L-homocysteine. The catalysed reaction is adenosine(37) in tRNA + 2 reduced [2Fe-2S]-[ferredoxin] + 2 S-adenosyl-L-methionine = 2-methyladenosine(37) in tRNA + 5'-deoxyadenosine + L-methionine + 2 oxidized [2Fe-2S]-[ferredoxin] + S-adenosyl-L-homocysteine. Its function is as follows. Specifically methylates position 2 of adenine 2503 in 23S rRNA and position 2 of adenine 37 in tRNAs. m2A2503 modification seems to play a crucial role in the proofreading step occurring at the peptidyl transferase center and thus would serve to optimize ribosomal fidelity. The sequence is that of Dual-specificity RNA methyltransferase RlmN from Burkholderia cenocepacia (strain HI2424).